The sequence spans 407 residues: O-methyltransferase verK (407 aa).

S-adenosyl-L-methionine is bound by residues Glu-263 and 295 to 297 (GDF). His-314 functions as the Proton acceptor in the catalytic mechanism.

This sequence belongs to the class I-like SAM-binding methyltransferase superfamily. Cation-independent O-methyltransferase family.

It participates in mycotoxin biosynthesis. In terms of biological role, O-methyltransferase; part of the gene cluster that mediates the biosynthesis of 11'-deoxyverticillin A, one of the dimeric epipolythiodioxopiperazines (ETPs) from the verticillin family that act as mycotoxins. 11'-deoxyverticillin A is required for normal conidiation. The nonribosomal peptide synthetase verP is speculated to be responsible for condensation of amino acids to form the carbon skeleton of verticillin, whereas the cluster-specific tailoring enzymes are involved in further modifications leading to the production of 11'-deoxyverticillin A. The protein is O-methyltransferase verK of Clonostachys rogersoniana.